The chain runs to 353 residues: Protein RecA (353 aa).

An ATP-binding site is contributed by 75–82 (GPESSGKT).

Belongs to the RecA family.

The protein resides in the cytoplasm. In terms of biological role, can catalyze the hydrolysis of ATP in the presence of single-stranded DNA, the ATP-dependent uptake of single-stranded DNA by duplex DNA, and the ATP-dependent hybridization of homologous single-stranded DNAs. It interacts with LexA causing its activation and leading to its autocatalytic cleavage. The polypeptide is Protein RecA (Cupriavidus pinatubonensis (strain JMP 134 / LMG 1197) (Cupriavidus necator (strain JMP 134))).